Here is a 62-residue protein sequence, read N- to C-terminus: Sucrase-isomaltase, intestinal (62 aa).

Over 2-12 (ARKKFSGLEIX) the chain is Cytoplasmic. The residue at position 7 (Ser-7) is a Phosphoserine; by PKA. Residues 13–32 (LIVLFAIVLSIAIALVVVXA) form a helical; Signal-anchor for type II membrane protein membrane-spanning segment. The Lumenal portion of the chain corresponds to 33-38 (SKXPAV). Tyr-59 carries the sulfotyrosine modification.

The protein belongs to the glycosyl hydrolase 31 family. In terms of assembly, the resulting sucrase and isomaltase subunits stay associated with one another in a complex by non-covalent linkages. Post-translationally, the precursor is proteolytically cleaved when exposed to pancreatic proteases in the intestinal lumen. Sulfated.

The protein localises to the apical cell membrane. The enzyme catalyses Hydrolysis of sucrose and maltose by an alpha-D-glucosidase-type action.. The catalysed reaction is Hydrolysis of (1-&gt;6)-alpha-D-glucosidic linkages in some oligosaccharides produced from starch and glycogen by alpha-amylase, and in isomaltose.. In terms of biological role, plays an important role in the final stage of carbohydrate digestion. Isomaltase activity is specific for both alpha-1,4- and alpha-1,6-oligosaccharides. In Sus scrofa (Pig), this protein is Sucrase-isomaltase, intestinal (SI).